The following is a 122-amino-acid chain: Small ribosomal subunit protein uS13 (122 aa).

Residues 97–122 (PVRGQRTHTNARTRKGPAKAIAGKKK) form a disordered region.

The protein belongs to the universal ribosomal protein uS13 family. As to quaternary structure, part of the 30S ribosomal subunit. Forms a loose heterodimer with protein S19. Forms two bridges to the 50S subunit in the 70S ribosome.

Its function is as follows. Located at the top of the head of the 30S subunit, it contacts several helices of the 16S rRNA. In the 70S ribosome it contacts the 23S rRNA (bridge B1a) and protein L5 of the 50S subunit (bridge B1b), connecting the 2 subunits; these bridges are implicated in subunit movement. Contacts the tRNAs in the A and P-sites. The sequence is that of Small ribosomal subunit protein uS13 from Brucella anthropi (strain ATCC 49188 / DSM 6882 / CCUG 24695 / JCM 21032 / LMG 3331 / NBRC 15819 / NCTC 12168 / Alc 37) (Ochrobactrum anthropi).